Consider the following 387-residue polypeptide: Phosphoglycerate kinase (387 aa).

Substrate contacts are provided by residues 21–23 (DLN), arginine 36, 59–62 (HLGR), arginine 113, and arginine 146. ATP-binding positions include lysine 197, glutamate 314, and 340 to 343 (GGDT).

Belongs to the phosphoglycerate kinase family. As to quaternary structure, monomer.

It localises to the cytoplasm. It catalyses the reaction (2R)-3-phosphoglycerate + ATP = (2R)-3-phospho-glyceroyl phosphate + ADP. Its pathway is carbohydrate degradation; glycolysis; pyruvate from D-glyceraldehyde 3-phosphate: step 2/5. The protein is Phosphoglycerate kinase of Pseudomonas putida (strain GB-1).